Here is a 745-residue protein sequence, read N- to C-terminus: MIINKPSRVRPDGRGKVTGELKYMTDLSFPGMLYGKVLRSAYPHAEIVSVCTIKAEKMEGVQAVVTHKDVPGLNRFGIVIPDQPVLCEDRVRYVGDAIAAVAAETEEIAEAALELIQVEYKELEVMDSPEKALRPNAQRLHEDGNILHRAFFSNGDVEEGFQASDTVFEETYELPRQMHTYMETEGGVAVPEDDGGFTMYAGTQHGYKDRFQLARIFDIPEEKIRIVSSPMGGSFGGKDELNIQPYAALLALKSGRPVKIHQTRKESVRSGIKRHPMKITIKTGADHSGNLLAHDVKIVADTGAYATLGPAVLDFSVEHAAGPYRIPNIRTEGISVFTNNGVAGEFRGFGGNQITFALETHLDRLSGMLGIDPLELRRKNIRKPHDLGPLEHRIAPTDGAAQVLNAISKSPILKKTSRNCGYLQRGTGAAITMHGGGLGFGRMDAAGGRLSLSSEGKITASFGFEECGQGILAAIEQIVMEELGCAAEDISIVIGDTAKVPKSGSSTASRGTSMVWHAIQRLKKPFLAQLKKRAAEWSGCSAENLIPGAAGLRDKNTKALVVTYKELAEKGPLAEETAFDFPTTPDPVVGGHFLYSFGAAAVEVEVDLLTGDVKLIDCEHAIAAGPVVSPQGYRGQIEGGAAMALGYTLMEEAKMTDGRYAAENLDHYLIPGIKDVPDMKLIAIEDLMKGDVYGPRGVGEIGTIAITPAIVKAVHDAVGCWINKLPISREELLEAIDRKGLKQWT.

3 residues coordinate Mo-molybdopterin: Q204, F235, and A508.

Belongs to the xanthine dehydrogenase family. Could be composed of four subunits: PucA, PucC, PucD and PucE. Mo-molybdopterin is required as a cofactor.

It catalyses the reaction xanthine + NAD(+) + H2O = urate + NADH + H(+). The catalysed reaction is hypoxanthine + NAD(+) + H2O = xanthine + NADH + H(+). The protein operates within purine metabolism; hypoxanthine degradation; urate from hypoxanthine: step 1/2. Its pathway is purine metabolism; hypoxanthine degradation; urate from hypoxanthine: step 2/2. Functionally, oxidizes hypoxanthine and xanthine to uric acid. The sequence is that of Probable xanthine dehydrogenase subunit D (pucD) from Bacillus subtilis (strain 168).